The sequence spans 184 residues: C-phycoerythrin class 1 subunit beta (184 aa).

C50 and C61 together coordinate (2R,3E)-phycoerythrobilin. An N4-methylasparagine modification is found at N72. Residues C82 and C165 each coordinate (2R,3E)-phycoerythrobilin.

Belongs to the phycobiliprotein family. Heterodimer of an alpha and a beta chain. Contains three covalently linked phycoerythrobilin chromophores.

The protein localises to the cellular thylakoid membrane. Functionally, light-harvesting photosynthetic bile pigment-protein from the phycobiliprotein complex. This chain is C-phycoerythrin class 1 subunit beta (cpeB), found in Synechococcus sp. (strain WH8020).